We begin with the raw amino-acid sequence, 140 residues long: Phosphopantetheine adenylyltransferase (140 aa).

S9 provides a ligand contact to substrate. ATP-binding positions include 9–10 (SF) and H17. Positions 41, 74, and 88 each coordinate substrate. ATP contacts are provided by residues 89–91 (GLR), E99, and 124–130 (KRSLSST).

The protein belongs to the bacterial CoaD family. As to quaternary structure, homohexamer. Requires Mg(2+) as cofactor.

The protein resides in the cytoplasm. The enzyme catalyses (R)-4'-phosphopantetheine + ATP + H(+) = 3'-dephospho-CoA + diphosphate. It functions in the pathway cofactor biosynthesis; coenzyme A biosynthesis; CoA from (R)-pantothenate: step 4/5. Its function is as follows. Reversibly transfers an adenylyl group from ATP to 4'-phosphopantetheine, yielding dephospho-CoA (dPCoA) and pyrophosphate. The protein is Phosphopantetheine adenylyltransferase of Mycoplasma mycoides subsp. mycoides SC (strain CCUG 32753 / NCTC 10114 / PG1).